Reading from the N-terminus, the 1018-residue chain is 2-oxoglutarate dehydrogenase-like, mitochondrial (1018 aa).

Positions 138, 151, and 153 each coordinate Ca(2+). Thiamine diphosphate is bound by residues Arg307, Asp406, Asn439, Ile441, and Gln671. Mg(2+) contacts are provided by Asp406, Asn439, and Ile441.

This sequence belongs to the alpha-ketoglutarate dehydrogenase family. The OGDHC complex comprises multiple copies of three catalytic enzyme components, the 2-oxoglutarate dehydrogenase (OGDH/E1), the dihydrolipoamide dehydrogenase (DLST/E2) and the dihydrolipoamide dehydrogenase (DLD/E3). OGDHL/E1-like isoenzyme may replace OGDH in the OGDHC complex in the brain. Thiamine diphosphate serves as cofactor. Mg(2+) is required as a cofactor.

It localises to the mitochondrion matrix. The enzyme catalyses N(6)-[(R)-lipoyl]-L-lysyl-[protein] + 2-oxoglutarate + H(+) = N(6)-[(R)-S(8)-succinyldihydrolipoyl]-L-lysyl-[protein] + CO2. In terms of biological role, 2-oxoglutarate dehydrogenase (E1-like) component of the 2-oxoglutarate dehydrogenase multienzyme complex (OGDHC) which mediates the decarboxylation of alpha-ketoglutarate in the tricarboxylic acid cycle. The OGDHC complex catalyzes the overall conversion of 2-oxoglutarate to succinyl-CoA and CO(2) while reducing NAD(+) to NADH. The OGDHC complex is mainly active in the mitochondrion. Involved in the inhibition of cell proliferation and in apoptosis. The sequence is that of 2-oxoglutarate dehydrogenase-like, mitochondrial (ogdhl) from Xenopus laevis (African clawed frog).